We begin with the raw amino-acid sequence, 782 residues long: Structure-specific endonuclease subunit SLX4 (782 aa).

2 disordered regions span residues T63 to M91 and K359 to K425. Residues G73 to K84 show a composition bias toward basic residues. Polar residues predominate over residues P374–D388.

This sequence belongs to the SLX4 family. Forms a heterodimer with SLX1. Phosphorylated in response to DNA damage.

The protein localises to the nucleus. Functionally, regulatory subunit of the SLX1-SLX4 structure-specific endonuclease that resolves DNA secondary structures generated during DNA repair and recombination. Has endonuclease activity towards branched DNA substrates, introducing single-strand cuts in duplex DNA close to junctions with ss-DNA. The protein is Structure-specific endonuclease subunit SLX4 of Scheffersomyces stipitis (strain ATCC 58785 / CBS 6054 / NBRC 10063 / NRRL Y-11545) (Yeast).